We begin with the raw amino-acid sequence, 286 residues long: Pyridoxal kinase PdxY (286 aa).

S8 contributes to the substrate binding site. ATP contacts are provided by D110 and E147. Position 223 (D223) interacts with substrate.

This sequence belongs to the pyridoxine kinase family. PdxY subfamily. In terms of assembly, homodimer. Mg(2+) is required as a cofactor.

It catalyses the reaction pyridoxal + ATP = pyridoxal 5'-phosphate + ADP + H(+). It functions in the pathway cofactor metabolism; pyridoxal 5'-phosphate salvage; pyridoxal 5'-phosphate from pyridoxal: step 1/1. In terms of biological role, pyridoxal kinase involved in the salvage pathway of pyridoxal 5'-phosphate (PLP). Catalyzes the phosphorylation of pyridoxal to PLP. In Granulibacter bethesdensis (strain ATCC BAA-1260 / CGDNIH1), this protein is Pyridoxal kinase PdxY.